Here is a 254-residue protein sequence, read N- to C-terminus: MLTVAGVEFESRLFTGTGKFSSSQLMLEAINASKSQLVTVSMKRIDLKTGADDLLTPLRQAGVRLLPNTSGARNAKEAIFAAELAREMLGTQWIKLEIHPDPKYLMPDAVETLTAAQILCERGFIVMPYVHADPVLCRRLEDVGCAAVMPLASPIGTNQGLVTEPFIKMIIEQARVPVVIDAGIGAPSHAAHAMELGADAVLVNTAIASSASPIEMALCFRDAVNCGRRAFEAGLGRVQTQAVHTSPLTGFLQQ.

Catalysis depends on K95, which acts as the Schiff-base intermediate with DXP. 1-deoxy-D-xylulose 5-phosphate contacts are provided by residues G156, 182–183, and 204–205; these read AG and NT.

It belongs to the ThiG family. As to quaternary structure, homotetramer. Forms heterodimers with either ThiH or ThiS.

It localises to the cytoplasm. The enzyme catalyses [ThiS sulfur-carrier protein]-C-terminal-Gly-aminoethanethioate + 2-iminoacetate + 1-deoxy-D-xylulose 5-phosphate = [ThiS sulfur-carrier protein]-C-terminal Gly-Gly + 2-[(2R,5Z)-2-carboxy-4-methylthiazol-5(2H)-ylidene]ethyl phosphate + 2 H2O + H(+). The protein operates within cofactor biosynthesis; thiamine diphosphate biosynthesis. Its function is as follows. Catalyzes the rearrangement of 1-deoxy-D-xylulose 5-phosphate (DXP) to produce the thiazole phosphate moiety of thiamine. Sulfur is provided by the thiocarboxylate moiety of the carrier protein ThiS. In vitro, sulfur can be provided by H(2)S. The chain is Thiazole synthase from Shewanella oneidensis (strain ATCC 700550 / JCM 31522 / CIP 106686 / LMG 19005 / NCIMB 14063 / MR-1).